The chain runs to 864 residues: DNA mismatch repair protein MutS (864 aa).

Residue 607–614 participates in ATP binding; sequence GPNMGGKS.

This sequence belongs to the DNA mismatch repair MutS family.

In terms of biological role, this protein is involved in the repair of mismatches in DNA. It is possible that it carries out the mismatch recognition step. This protein has a weak ATPase activity. The chain is DNA mismatch repair protein MutS from Neisseria meningitidis serogroup B (strain ATCC BAA-335 / MC58).